A 481-amino-acid chain; its full sequence is Argininosuccinate lyase (481 aa).

The protein belongs to the lyase 1 family. Argininosuccinate lyase subfamily.

The protein resides in the cytoplasm. It catalyses the reaction 2-(N(omega)-L-arginino)succinate = fumarate + L-arginine. The protein operates within amino-acid biosynthesis; L-arginine biosynthesis; L-arginine from L-ornithine and carbamoyl phosphate: step 3/3. The chain is Argininosuccinate lyase from Methanococcus maripaludis (strain C6 / ATCC BAA-1332).